Here is a 945-residue protein sequence, read N- to C-terminus: Kinesin-like protein KIN-7F (945 aa).

One can recognise a Kinesin motor domain in the interval 34–356 (RILVSVRLRP…LLFASCAKEV (323 aa)). Residue 120 to 127 (GQTSSGKT) participates in ATP binding. Residues 365 to 437 (VMSDKALVKQ…QDLLQVVGDN (73 aa)) are a coiled coil. 2 disordered regions span residues 484–512 (RRVA…SVSS) and 553–588 (NECL…MNSR). Composition is skewed to polar residues over residues 495-512 (QAEN…SVSS) and 560-587 (AVGS…SMNS).

This sequence belongs to the TRAFAC class myosin-kinesin ATPase superfamily. Kinesin family. KIN-7 subfamily. In terms of assembly, binds microtubules.

In terms of biological role, binds ATP/ADP in vitro. Possesses low ATPase activity but high affinity for microtubules. This chain is Kinesin-like protein KIN-7F, found in Oryza sativa subsp. japonica (Rice).